Reading from the N-terminus, the 127-residue chain is Holo-[acyl-carrier-protein] synthase (127 aa).

Positions 9 and 58 each coordinate Mg(2+).

It belongs to the P-Pant transferase superfamily. AcpS family. It depends on Mg(2+) as a cofactor.

The protein resides in the cytoplasm. It carries out the reaction apo-[ACP] + CoA = holo-[ACP] + adenosine 3',5'-bisphosphate + H(+). Transfers the 4'-phosphopantetheine moiety from coenzyme A to a Ser of acyl-carrier-protein. This is Holo-[acyl-carrier-protein] synthase from Shewanella sp. (strain ANA-3).